Reading from the N-terminus, the 274-residue chain is Undecaprenyl-diphosphatase (274 aa).

7 consecutive transmembrane segments (helical) span residues 21–39, 44–64, 85–105, 109–129, 185–205, 214–234, and 247–267; these read FLPISSTGHLILAGALLGF, AQVFDVAIQTGAILAVILVYW, FNLAIGFFPAVLLGLLFGKAI, LFTPVVVASTFIIGGLVILWA, ATDFSFFLAIPTLIGAGVYSL, VADLPMFLTGLVFSFLSAWLC, and FVPFAYYRIGFGLMVLVTAST.

This sequence belongs to the UppP family.

It localises to the cell inner membrane. It catalyses the reaction di-trans,octa-cis-undecaprenyl diphosphate + H2O = di-trans,octa-cis-undecaprenyl phosphate + phosphate + H(+). Functionally, catalyzes the dephosphorylation of undecaprenyl diphosphate (UPP). Confers resistance to bacitracin. This is Undecaprenyl-diphosphatase from Verminephrobacter eiseniae (strain EF01-2).